The following is a 410-amino-acid chain: Elongation factor Tu, apicoplast (410 aa).

One can recognise a tr-type G domain in the interval 10 to 214 (KQHINLGTIG…QIIDNIIIPT (205 aa)). The segment at 19-26 (GHVDHGKT) is G1. Position 19-26 (19-26 (GHVDHGKT)) interacts with GTP. Thr26 is a binding site for Mg(2+). The G2 stretch occupies residues 60–64 (GITIN). Positions 81–84 (DCPG) are G3. GTP contacts are provided by residues 81-85 (DCPGH) and 136-139 (NKED). The segment at 136–139 (NKED) is G4. Residues 174 to 176 (SAL) form a G5 region.

This sequence belongs to the TRAFAC class translation factor GTPase superfamily. Classic translation factor GTPase family. EF-Tu/EF-1A subfamily.

It is found in the plastid. It localises to the apicoplast. It catalyses the reaction GTP + H2O = GDP + phosphate + H(+). Its function is as follows. GTP hydrolase that promotes the GTP-dependent binding of aminoacyl-tRNA to the A-site of ribosomes during protein biosynthesis. In Plasmodium falciparum (isolate 3D7), this protein is Elongation factor Tu, apicoplast (tufA).